We begin with the raw amino-acid sequence, 123 residues long: Large ribosomal subunit protein bL17 (123 aa).

It belongs to the bacterial ribosomal protein bL17 family. Part of the 50S ribosomal subunit. Contacts protein L32.

In Dichelobacter nodosus (strain VCS1703A), this protein is Large ribosomal subunit protein bL17.